The primary structure comprises 609 residues: mRNA-decapping enzyme 1B (609 aa).

Residue Ala2 is modified to N-acetylalanine. Residue Ser147 is modified to Phosphoserine. A Phosphotyrosine modification is found at Tyr191. 2 disordered regions span residues Pro201–Glu222 and Thr243–Arg264. Residues Ser205–Leu219 show a composition bias toward polar residues. Residues Ser272 and Ser333 each carry the phosphoserine modification. Disordered regions lie at residues Thr326–Asn345 and Thr359–Val438. Residues Asn336–Asn345 show a composition bias toward polar residues. Residues Pro368–Ala378 are compositionally biased toward low complexity. Position 389 is a phosphothreonine (Thr389). Polar residues predominate over residues Gln418–Val438. Ser440 and Ser503 each carry phosphoserine.

The protein belongs to the DCP1 family. As to quaternary structure, interacts with DCP1A.

Its subcellular location is the cytoplasm. The protein localises to the nucleus. It catalyses the reaction a 5'-end (N(7)-methyl 5'-triphosphoguanosine)-ribonucleoside in mRNA + H2O = N(7)-methyl-GDP + a 5'-end phospho-ribonucleoside in mRNA + 2 H(+). In terms of biological role, may play a role in the degradation of mRNAs, both in normal mRNA turnover and in nonsense-mediated mRNA decay. May remove the 7-methyl guanine cap structure from mRNA molecules, yielding a 5'-phosphorylated mRNA fragment and 7m-GDP. The polypeptide is mRNA-decapping enzyme 1B (DCP1B) (Pongo abelii (Sumatran orangutan)).